We begin with the raw amino-acid sequence, 799 residues long: MTEVKTGRVVDDAPVNDAPENNAAEATSPARHDAIPEEARQRAAQLRADLERHNRLYYELDTPEISDAEYDALYRELVGLETRWPALRDEASPTQRVGGEVLEGLEKQAHTLRMYSLDNAFSRDEWGAFIQRMYNALPDAPSAFWCDPKMDGLALEVIYENGVFTSALTRGNGEVGEVVTAAMRTVRNLPLALRGDDVPRRIEVRGEVVIAKADFEQLNARQSAAGGKLFANPRNAAAGSVRQLDTTVTAGRPLQFLAYGVGQVVLEGGTAPWTTHSGLMARLREWGFDTPPEGRLCASPDEVWAYYEALGARRESLAIEIDGVVAKLDDTEAQEALGFTARAPRWALALKFPAMQARTRLDDIRVQVGRTGVLTPVAILEPVRVGGVEVSRATLHNEDEIRAKGLMLGDMVLVQRAGDVIPEVVRPLVEERTGDERPFVFPENCPECDSPVVRPQGEVAHRCVNVMCPAVRRQSIIHFVSKAGLDVRGVGERWVQQLVDGGHVTSPVGLFLLTKLDLMRFERMGPTSAANFVTALDAARTGATLVRLICALGIRHVGEQTARTLAANFTDLDALREADAETLQQLPDIGPEVAGSIRSFFANEGNLELLERLRAIGLWPKRQDAPPASEGADAIVLPLQGLKVLFTGSLTRVGRTEAEDMARAAGANIASSVTKSLDLLVVGGKPGSKLEKARKLGIRVMEEADFFAMLASGVASVDASEAVAEETPPSQEAAGAEDAPSQGAAHVRTASDETGSASGDDSRGAAAENDPARPARGGAMSTAEGEDVPRGRAEQLKLF.

A compositionally biased stretch (basic and acidic residues) spans 1–11 (MTEVKTGRVVD). Residues 1-35 (MTEVKTGRVVDDAPVNDAPENNAAEATSPARHDAI) are disordered. Residues 67 to 71 (DAEYD), 116 to 117 (SL), and D147 contribute to the NAD(+) site. Catalysis depends on K149, which acts as the N6-AMP-lysine intermediate. R170, E207, K327, and K351 together coordinate NAD(+). Residues C445, C448, C463, and C468 each contribute to the Zn(2+) site. The 90-residue stretch at 634-723 (AIVLPLQGLK…VASVDASEAV (90 aa)) folds into the BRCT domain. The segment at 720 to 799 (SEAVAEETPP…RGRAEQLKLF (80 aa)) is disordered. The segment covering 755-767 (GSASGDDSRGAAA) has biased composition (low complexity). Residues 787 to 799 (DVPRGRAEQLKLF) show a composition bias toward basic and acidic residues.

The protein belongs to the NAD-dependent DNA ligase family. LigA subfamily. Requires Mg(2+) as cofactor. Mn(2+) serves as cofactor.

It carries out the reaction NAD(+) + (deoxyribonucleotide)n-3'-hydroxyl + 5'-phospho-(deoxyribonucleotide)m = (deoxyribonucleotide)n+m + AMP + beta-nicotinamide D-nucleotide.. In terms of biological role, DNA ligase that catalyzes the formation of phosphodiester linkages between 5'-phosphoryl and 3'-hydroxyl groups in double-stranded DNA using NAD as a coenzyme and as the energy source for the reaction. It is essential for DNA replication and repair of damaged DNA. The chain is DNA ligase from Nitratidesulfovibrio vulgaris (strain ATCC 29579 / DSM 644 / CCUG 34227 / NCIMB 8303 / VKM B-1760 / Hildenborough) (Desulfovibrio vulgaris).